Consider the following 326-residue polypeptide: Biotin synthase (326 aa).

The region spanning 47–274 is the Radical SAM core domain; sequence NEVQVSSLLS…ASRVRLSAGR (228 aa). [4Fe-4S] cluster-binding residues include Cys62, Cys66, and Cys69. [2Fe-2S] cluster is bound by residues Cys106, Cys137, Cys197, and Arg269.

It belongs to the radical SAM superfamily. Biotin synthase family. In terms of assembly, homodimer. [4Fe-4S] cluster is required as a cofactor. [2Fe-2S] cluster serves as cofactor.

The enzyme catalyses (4R,5S)-dethiobiotin + (sulfur carrier)-SH + 2 reduced [2Fe-2S]-[ferredoxin] + 2 S-adenosyl-L-methionine = (sulfur carrier)-H + biotin + 2 5'-deoxyadenosine + 2 L-methionine + 2 oxidized [2Fe-2S]-[ferredoxin]. Its pathway is cofactor biosynthesis; biotin biosynthesis; biotin from 7,8-diaminononanoate: step 2/2. Catalyzes the conversion of dethiobiotin (DTB) to biotin by the insertion of a sulfur atom into dethiobiotin via a radical-based mechanism. This Methylococcus capsulatus (strain ATCC 33009 / NCIMB 11132 / Bath) protein is Biotin synthase.